The chain runs to 262 residues: Small ribosomal subunit protein eS4x (262 aa).

Residues 42 to 104 form the S4 RNA-binding domain; it reads LPLVLIIRNR…TNENFRLLYD (63 aa).

It belongs to the eukaryotic ribosomal protein eS4 family.

It is found in the cytoplasm. The polypeptide is Small ribosomal subunit protein eS4x (RPS4D) (Arabidopsis thaliana (Mouse-ear cress)).